The chain runs to 223 residues: Ribose-5-phosphate isomerase A (223 aa).

Substrate contacts are provided by residues 32–35 (TGST), 85–88 (DGAD), and 98–101 (KGGG). The Proton acceptor role is filled by E107. A substrate-binding site is contributed by K125.

This sequence belongs to the ribose 5-phosphate isomerase family. Homodimer.

The enzyme catalyses aldehydo-D-ribose 5-phosphate = D-ribulose 5-phosphate. It participates in carbohydrate degradation; pentose phosphate pathway; D-ribose 5-phosphate from D-ribulose 5-phosphate (non-oxidative stage): step 1/1. Its function is as follows. Catalyzes the reversible conversion of ribose-5-phosphate to ribulose 5-phosphate. This Pseudomonas savastanoi pv. phaseolicola (strain 1448A / Race 6) (Pseudomonas syringae pv. phaseolicola (strain 1448A / Race 6)) protein is Ribose-5-phosphate isomerase A.